The following is a 1125-amino-acid chain: Telomerase reverse transcriptase (1125 aa).

The tract at residues 1–234 is RNA-interacting domain 1; the sequence is MPRAPRCRAV…ARRRRSSARG (234 aa). The GQ motif stretch occupies residues 58–199; it reads VPWDAQPPPA…RQVGGTRAGF (142 aa). Residues 137–141 are required for regulating specificity for telomeric DNA and for processivity for primer elongation; sequence WGLLL. Residues 186–308 are disordered; it reads RRPTRQVGGT…WRLSPSEGEP (123 aa). Residues 224-243 show a composition bias toward basic residues; sequence GARRRRSSARGRLPPAKRPR. Positions 226 to 244 match the Bipartite nuclear localization signal motif; that stretch reads RRRRSSARGRLPPAKRPRR. S231 bears the Phosphoserine; by PKB/AKT1 mark. The interval 235 to 312 is linker; that stretch reads RLPPAKRPRR…PSEGEPGAGA (78 aa). 2 stretches are compositionally biased toward basic and acidic residues: residues 244–253 and 269–279; these read RGLEPGRDLE and DAAEAKSRKGD. Positions 290–531 are required for oligomerization; sequence GERGVGSASW…VPAAEHRQRE (242 aa). The RNA-interacting domain 2 stretch occupies residues 313–543; that stretch reads CAETKRFLYC…LGRFLHWLMG (231 aa). The short motif at 316 to 321 is the TFLY; involved in RNA binding element; sequence TKRFLY. A QFP motif region spans residues 364 to 514; the sequence is PRRPRRLPAR…MKVQDCAWLR (151 aa). Residues 385-405 are CP motif; it reads LGNHARSPYGALLRAHCPLPA. Position 450 is a phosphoserine; by DYRK2 (S450). The Reverse transcriptase domain maps to 598–928; that stretch reads EVRQHQEARP…CLFPWCGLLL (331 aa). Y700 bears the Phosphotyrosine; by SRC-type Tyr-kinases mark. Residues D705, D861, and D862 each coordinate Mg(2+). Residues 907–921 are required for oligomerization; it reads LGGAAPLQLPAHCLF. The primer grip sequence stretch occupies residues 923–927; it reads WCGLL. The tract at residues 929 to 1125 is CTE; sequence DTRTLEVHGD…LTADFKTILD (197 aa).

This sequence belongs to the reverse transcriptase family. Telomerase subfamily. As to quaternary structure, catalytic component of the telomerase holoenzyme complex composed of one molecule of TERT, one molecule of WRAP53/TCAB1, two molecules of H/ACA ribonucleoprotein complex subunits DKC1, NOP10, NHP2 and GAR1, and a telomerase RNA template component (TERC). The telomerase holoenzyme complex is associated with TEP1, SMG6/EST1A and POT1. The molecular chaperone HSP90/P23 complex is required for correct assembly and stabilization of the active telomerase. Interacts directly with HSP90A and PTGES3. Interacts with HSPA1A; the interaction occurs in the absence of TERC and dissociates once the complex has formed. Interacts with RAN; the interaction promotes nuclear export of TERT. Interacts with XPO1. Interacts with PTPN11; the interaction retains TERT in the nucleus. Interacts with NCL (via RRM1 and C-terminal RRM4/Arg/Gly-rich domains); the interaction is important for nucleolar localization of TERT. Interacts with SMARCA4 (via the bromodomain); the interaction regulates Wnt-mediated signaling. Interacts with MCRS1 (isoform MCRS2); the interaction inhibits in vitro telomerase activity. Interacts with PIF1; the interaction has no effect on the elongation activity of TERT. Interacts with PML; the interaction recruits TERT to PML bodies and inhibits telomerase activity. Interacts with GNL3L. Interacts with isoform 1 and isoform 2 of NVL. Interacts with DHX36. Interacts with ATF7. In terms of processing, phosphorylation at Tyr-700 under oxidative stress leads to translocation of TERT to the cytoplasm and reduces its antiapoptotic activity. Dephosphorylated by SHP2/PTPN11 leading to nuclear retention. Phosphorylation at Ser-231 by the AKT pathway promotes nuclear location. Phosphorylation at the G2/M phase at Ser-450 by DYRK2 promotes ubiquitination by the EDVP complex and degradation. Ubiquitinated by the EDVP complex, a E3 ligase complex following phosphorylation at Ser-450 by DYRK2. Ubiquitinated leads to proteasomal degradation.

Its subcellular location is the nucleus. The protein resides in the nucleolus. It is found in the nucleoplasm. It localises to the chromosome. The protein localises to the telomere. Its subcellular location is the cytoplasm. The protein resides in the PML body. It carries out the reaction DNA(n) + a 2'-deoxyribonucleoside 5'-triphosphate = DNA(n+1) + diphosphate. In terms of biological role, telomerase is a ribonucleoprotein enzyme essential for the replication of chromosome termini in most eukaryotes. Active in progenitor and cancer cells. Inactive, or very low activity, in normal somatic cells. Catalytic component of the teleromerase holoenzyme complex whose main activity is the elongation of telomeres by acting as a reverse transcriptase that adds simple sequence repeats to chromosome ends by copying a template sequence within the RNA component of the enzyme. Catalyzes the RNA-dependent extension of 3'-chromosomal termini with the 6-nucleotide telomeric repeat unit, 5'-TTAGGG-3'. The catalytic cycle involves primer binding, primer extension and release of product once the template boundary has been reached or nascent product translocation followed by further extension. More active on substrates containing 2 or 3 telomeric repeats. Telomerase activity is regulated by a number of factors including telomerase complex-associated proteins, chaperones and polypeptide modifiers. Modulates Wnt signaling. Plays important roles in aging and antiapoptosis. This chain is Telomerase reverse transcriptase (TERT), found in Bos taurus (Bovine).